Here is a 335-residue protein sequence, read N- to C-terminus: Phospholipid scramblase 1 (335 aa).

The tract at residues 1–101 (MEKHGPPEHA…NHPGGPGGTP (101 aa)) is proline-rich domain (PRD). Residues 1–102 (MEKHGPPEHA…HPGGPGGTPW (102 aa)) form a disordered region. Residues 1–305 (MEKHGPPEHA…IQFPLDLDVK (305 aa)) are Cytoplasmic-facing. 6 consecutive repeat copies span residues 23-29 (QGPYPGP), 30-36 (QGPYPGP), 37-43 (QGPYAGP), 44-50 (QGPYPGP), 51-57 (QGPYAGP), and 58-64 (QGPYPGP). Residues 23 to 71 (QGPYPGPQGPYPGPQGPYAGPQGPYPGPQGPYAGPQGPYPGPQPGYPVP) form a 7 X 7 AA tandem repeats of Q-G-P-Y-[AP]-G-P region. Residues 26–37 (YPGPQGPYPGPQ) are compositionally biased toward pro residues. Pro residues predominate over residues 59-72 (GPYPGPQPGYPVPP). The SH3-binding 1 signature appears at 64-72 (PQPGYPVPP). One copy of the 7; approximate repeat lies at 65–71 (QPGYPVP). Phosphotyrosine; by ABL is present on Tyr91. Positions 101–109 (PWMQAPPPP) match the SH3-binding 2 motif. Thr178 bears the Phosphothreonine; by PKC/PRKCD mark. S-palmitoyl cysteine attachment occurs at residues Cys201, Cys202, Cys205, and Cys206. Positions 274 to 283 (GKISKQWSGF) match the Nuclear localization signal motif. Residues 306–322 (MKAVMLGACFLIDFMFF) traverse the membrane as a helical segment. Topologically, residues 323–335 (ERTGNEEQRSGVW) are extracellular.

Belongs to the phospholipid scramblase family. Forms homooligomers in the presence of calcium. Interacts with ABL. Interacts with RELT, RELL1 and RELL2. Interacts with OXSR1 in the presence of RELT. Interacts with OCLN, TOP2A and TOP2B. Interacts with TRPC1, TRPC4 and TRPC5. Interacts with ILDR1. Ca(2+) is required as a cofactor. Requires Mg(2+) as cofactor. The cofactor is Zn(2+). Post-translationally, phosphorylated on tyrosine residues. Phosphorylated by OXSR1 in the presence of RELT. Phosphorylation at Thr-178 by PKC/PKCD increases its phospholipid scramblase activity during both cell stimulation and apoptosis. Palmitoylation is required for its phospholipid scramblase activity. Palmitoylation regulates its localization to the cell membrane or the nucleus; trafficking to the cell membrane is dependent upon palmitoylation whereas in the absence of palmitoylation, localizes to the nucleus.

Its subcellular location is the cell membrane. The protein resides in the nucleus. It is found in the cytoplasm. The protein localises to the perinuclear region. It carries out the reaction a 1,2-diacyl-sn-glycero-3-phosphocholine(in) = a 1,2-diacyl-sn-glycero-3-phosphocholine(out). The enzyme catalyses a 1,2-diacyl-sn-glycero-3-phosphoethanolamine(in) = a 1,2-diacyl-sn-glycero-3-phosphoethanolamine(out). It catalyses the reaction a 1,2-diacyl-sn-glycero-3-phospho-L-serine(in) = a 1,2-diacyl-sn-glycero-3-phospho-L-serine(out). Functionally, catalyzes calcium-induced ATP-independent rapid bidirectional and non-specific distribution of phospholipids (lipid scrambling or lipid flip-flop) between the inner and outer leaflet of the plasma membrane resulting in collapse of the phospholipid asymmetry which leads to phosphatidylserine externalization on the cell surface. Mediates calcium-dependent phosphatidylserine externalization and apoptosis in neurons via its association with TRPC5. Also exhibits magnesium-dependent nuclease activity against double-stranded DNA and RNA but not single-stranded DNA and can enhance DNA decatenation mediated by TOP2A. Negatively regulates FcR-mediated phagocytosis in differentiated macrophages. May contribute to cytokine-regulated cell proliferation and differentiation. The protein is Phospholipid scramblase 1 (Plscr1) of Rattus norvegicus (Rat).